The chain runs to 559 residues: Glucans biosynthesis protein G (559 aa).

The first 37 residues, 1 to 37, serve as a signal peptide directing secretion; that stretch reads MVSLLSCGTSASSHIVKKALTRLSLAMAAGLCFNLAA.

The protein belongs to the OpgD/OpgG family.

It localises to the periplasm. The protein operates within glycan metabolism; osmoregulated periplasmic glucan (OPG) biosynthesis. Functionally, involved in the biosynthesis of osmoregulated periplasmic glucans (OPGs). The sequence is that of Glucans biosynthesis protein G from Shewanella frigidimarina (strain NCIMB 400).